We begin with the raw amino-acid sequence, 39 residues long: Photosystem II reaction center protein J (39 aa).

A helical membrane pass occupies residues 9–29 (LWLVGLVGGFAVITIVSLFIY).

The protein belongs to the PsbJ family. As to quaternary structure, PSII is composed of 1 copy each of membrane proteins PsbA, PsbB, PsbC, PsbD, PsbE, PsbF, PsbH, PsbI, PsbJ, PsbK, PsbL, PsbM, PsbT, PsbX, PsbY, PsbZ, Psb30/Ycf12, at least 3 peripheral proteins of the oxygen-evolving complex and a large number of cofactors. It forms dimeric complexes.

The protein localises to the plastid. The protein resides in the chloroplast thylakoid membrane. In terms of biological role, one of the components of the core complex of photosystem II (PSII). PSII is a light-driven water:plastoquinone oxidoreductase that uses light energy to abstract electrons from H(2)O, generating O(2) and a proton gradient subsequently used for ATP formation. It consists of a core antenna complex that captures photons, and an electron transfer chain that converts photonic excitation into a charge separation. This chain is Photosystem II reaction center protein J, found in Thalassiosira pseudonana (Marine diatom).